A 193-amino-acid chain; its full sequence is Probable GTP-binding protein EngB (193 aa).

The EngB-type G domain maps to 22–193 (MYPEISFIGR…ELWQIIEDLL (172 aa)). GTP contacts are provided by residues 30–37 (GRSNVGKS), 57–61 (GKTRT), 75–78 (DLPG), 142–145 (TKMD), and 174–176 (FSS). 2 residues coordinate Mg(2+): Ser-37 and Thr-59.

This sequence belongs to the TRAFAC class TrmE-Era-EngA-EngB-Septin-like GTPase superfamily. EngB GTPase family. Mg(2+) serves as cofactor.

Its function is as follows. Necessary for normal cell division and for the maintenance of normal septation. The chain is Probable GTP-binding protein EngB from Natranaerobius thermophilus (strain ATCC BAA-1301 / DSM 18059 / JW/NM-WN-LF).